Here is a 236-residue protein sequence, read N- to C-terminus: MNIRFSMLVCVSFIFFTGGCAESSANSNDGSKNKNESKEESSEEGVKENDNKLADTPNMDDCIEVYGKEECEQITEYYKSEEGQKELDASETDKYSAKSQTSTTHKDIYEKVSWLVKEMFGVPERTIPADYEKSLVEKRDDGLYYIQSSYEIKGTGNQADTYYEFEMLMDNKYNLIDAYFPGSTGRYSRPMVYDKLKNMEIPEVKKVSPEEEKREEKKREETMKSIYGEEHIKDNK.

A signal peptide spans 1 to 19 (MNIRFSMLVCVSFIFFTGG). Cys-20 is lipidated: N-palmitoyl cysteine. Cys-20 carries S-diacylglycerol cysteine lipidation. Disordered regions lie at residues 23–59 (SSAN…TPNM) and 204–236 (VKKV…KDNK). Residues 31–53 (SKNKNESKEESSEEGVKENDNKL) show a composition bias toward basic and acidic residues.

The protein resides in the cell membrane. This Bacillus subtilis (strain 168) protein is SPbeta prophage-derived uncharacterized lipoprotein YokB (yokB).